The sequence spans 361 residues: Protein Wnt-2 (361 aa).

Residues 1-27 form the signal peptide; sequence MNASVLGLCLSGPLVLLLAWLAPPVTS. Cystine bridges form between C77-C88, C128-C136, C138-C158, C207-C221, C209-C216, C279-C310, C295-C305, C309-C349, C325-C340, C327-C337, and C332-C333. S213 carries O-palmitoleoyl serine; by PORCN lipidation. N-linked (GlcNAc...) asparagine glycosylation is present at N296.

Belongs to the Wnt family. In terms of processing, palmitoleoylation is required for efficient binding to frizzled receptors. Depalmitoleoylation leads to Wnt signaling pathway inhibition.

It localises to the secreted. It is found in the extracellular space. Its subcellular location is the extracellular matrix. Ligand for members of the frizzled family of seven transmembrane receptors. Probable developmental protein. May be a signaling molecule which affects the development of discrete regions of tissues. Is likely to signal over only few cell diameters. The protein is Protein Wnt-2 (WNT2) of Ornithorhynchus anatinus (Duckbill platypus).